We begin with the raw amino-acid sequence, 141 residues long: Nucleoside diphosphate kinase (141 aa).

6 residues coordinate ATP: lysine 11, phenylalanine 59, arginine 87, threonine 93, arginine 104, and asparagine 114. Residue histidine 117 is the Pros-phosphohistidine intermediate of the active site.

Belongs to the NDK family. Homotetramer. It depends on Mg(2+) as a cofactor.

The protein localises to the cytoplasm. The enzyme catalyses a 2'-deoxyribonucleoside 5'-diphosphate + ATP = a 2'-deoxyribonucleoside 5'-triphosphate + ADP. The catalysed reaction is a ribonucleoside 5'-diphosphate + ATP = a ribonucleoside 5'-triphosphate + ADP. Functionally, major role in the synthesis of nucleoside triphosphates other than ATP. The ATP gamma phosphate is transferred to the NDP beta phosphate via a ping-pong mechanism, using a phosphorylated active-site intermediate. The sequence is that of Nucleoside diphosphate kinase from Bordetella bronchiseptica (strain ATCC BAA-588 / NCTC 13252 / RB50) (Alcaligenes bronchisepticus).